A 1109-amino-acid polypeptide reads, in one-letter code: Cation channel sperm-associated auxiliary subunit beta (1109 aa).

At 1 to 1055 the chain is on the extracellular side; the sequence is MESPLIYVML…QIYVDEVPLP (1055 aa). C35 and C60 are oxidised to a cystine. 3 N-linked (GlcNAc...) asparagine glycosylation sites follow: N66, N90, and N118. A disulfide bridge connects residues C189 and C302. N-linked (GlcNAc...) asparagine glycosylation is present at N321. An intrachain disulfide couples C330 to C343. N-linked (GlcNAc...) asparagine glycosylation is present at N672. Disulfide bonds link C720–C818, C831–C1039, C913–C922, and C924–C939. N-linked (GlcNAc...) asparagine glycans are attached at residues N915 and N923. N-linked (GlcNAc...) asparagine glycosylation is present at N1017. The helical transmembrane segment at 1056-1078 threads the bilayer; the sequence is FPGHALIAVATSVVLGVLIFIAF. At 1079–1109 the chain is on the cytoplasmic side; it reads VFQLRNIHPLKALKKSIRGNPGLTSSTTVSS.

Component of the CatSper complex or CatSpermasome composed of the core pore-forming members CATSPER1, CATSPER2, CATSPER3 and CATSPER4 as well as auxiliary members CATSPERB, CATSPERG2, CATSPERD, CATSPERE, CATSPERZ, C2CD6/CATSPERT, SLCO6C1, TMEM249, TMEM262 and EFCAB9. HSPA1 may be an additional auxiliary complex member. The core complex members CATSPER1, CATSPER2, CATSPER3 and CATSPER4 form a heterotetrameric channel. The auxiliary CATSPERB, CATSPERG2, CATSPERD and CATSPERE subunits form a pavilion-like structure over the pore which stabilizes the complex through interactions with CATSPER4, CATSPER3, CATSPER1 and CATSPER2 respectively. SLCO6C1 interacts with CATSPERE and TMEM262/CATSPERH interacts with CATSPERB, further stabilizing the complex. C2CD6/CATSPERT interacts at least with CATSPERD and is required for targeting the CatSper complex in the flagellar membrane. As to expression, testis-specific. Specifically present in the principal piece of sperm tail (at protein level). Specifically expressed in the seminiferous tubules but not in the interstitial cells. Within the tubules, it is expressed in spermatocytes and spermatids, but not in spermatogonia.

The protein resides in the cell projection. The protein localises to the cilium. It localises to the flagellum membrane. Functionally, auxiliary component of the CatSper complex, a complex involved in sperm cell hyperactivation. Sperm cell hyperactivation is needed for sperm motility which is essential late in the preparation of sperm for fertilization. The polypeptide is Cation channel sperm-associated auxiliary subunit beta (Mus musculus (Mouse)).